The following is a 111-amino-acid chain: uncharacterized protein (111 aa).

Residues 48–70 (LFLVPFPASFTRWLTFLFHLVIY) traverse the membrane as a helical segment.

Its subcellular location is the membrane. This is an uncharacterized protein from Saccharomyces cerevisiae (strain ATCC 204508 / S288c) (Baker's yeast).